The primary structure comprises 356 residues: MRQILFAGAIGLFLTLVGTPLLIKLLARKGYGQFIRDDGPRTHGSKKGTPTMGGIAFILATIVAYLLAKVITGEDIRYSGLLVLFLMAGMGLVGFLDDYIKIVKQRSLGLRAKAKMAGQLIVGIAFAVLSLQFPNSMNYTPASTRLSFVEDFGWSIGPVLFCVWALFMILAMSNGVNLTDGLDGLATGASVMVFGAYTFIGLWQFQESCANADNLTNPSACYEVRDPLDLAVVAAALMGACFGFLWWNTSPAKIFMGDTGSLALGGALAGLAILSRTEFLLAILGGLFVMITMSVVIQVGSFKMTGKRVFRMAPLQHHFELKGWSEVLVVVRFWIIQGMCVIVGLGLFYAGWAAKK.

10 helical membrane passes run 3–23 (QILFAGAIGLFLTLVGTPLLI), 51–71 (TMGGIAFILATIVAYLLAKVI), 80–100 (GLLVLFLMAGMGLVGFLDDYI), 114–134 (AKMAGQLIVGIAFAVLSLQFP), 152–172 (FGWSIGPVLFCVWALFMILAM), 185–205 (LATGASVMVFGAYTFIGLWQF), 227–247 (PLDLAVVAAALMGACFGFLWW), 254–274 (IFMGDTGSLALGGALAGLAIL), 279–299 (FLLAILGGLFVMITMSVVIQV), and 333–353 (FWIIQGMCVIVGLGLFYAGWA).

This sequence belongs to the glycosyltransferase 4 family. MraY subfamily. It depends on Mg(2+) as a cofactor.

The protein resides in the cell membrane. It carries out the reaction UDP-N-acetyl-alpha-D-muramoyl-L-alanyl-gamma-D-glutamyl-meso-2,6-diaminopimeloyl-D-alanyl-D-alanine + di-trans,octa-cis-undecaprenyl phosphate = di-trans,octa-cis-undecaprenyl diphospho-N-acetyl-alpha-D-muramoyl-L-alanyl-D-glutamyl-meso-2,6-diaminopimeloyl-D-alanyl-D-alanine + UMP. The protein operates within cell wall biogenesis; peptidoglycan biosynthesis. Its function is as follows. Catalyzes the initial step of the lipid cycle reactions in the biosynthesis of the cell wall peptidoglycan: transfers peptidoglycan precursor phospho-MurNAc-pentapeptide from UDP-MurNAc-pentapeptide onto the lipid carrier undecaprenyl phosphate, yielding undecaprenyl-pyrophosphoryl-MurNAc-pentapeptide, known as lipid I. This is Phospho-N-acetylmuramoyl-pentapeptide-transferase from Streptomyces griseus subsp. griseus (strain JCM 4626 / CBS 651.72 / NBRC 13350 / KCC S-0626 / ISP 5235).